Consider the following 215-residue polypeptide: Cytochrome b6 (215 aa).

A helical transmembrane segment spans residues 32–52 (IFYCLGGIVFVSFLIQVATGF). Cys-35 provides a ligand contact to heme c. His-86 and His-100 together coordinate heme b. 3 consecutive transmembrane segments (helical) span residues 90-110 (VSMM…TGGF), 116-136 (LTWV…VTGY), and 186-206 (LHTF…FLMI). Heme b-binding residues include His-187 and His-202.

Belongs to the cytochrome b family. PetB subfamily. The 4 large subunits of the cytochrome b6-f complex are cytochrome b6, subunit IV (17 kDa polypeptide, PetD), cytochrome f and the Rieske protein, while the 4 small subunits are PetG, PetL, PetM and PetN. The complex functions as a dimer. Heme b serves as cofactor. Requires heme c as cofactor.

It is found in the plastid. The protein localises to the chloroplast thylakoid membrane. Component of the cytochrome b6-f complex, which mediates electron transfer between photosystem II (PSII) and photosystem I (PSI), cyclic electron flow around PSI, and state transitions. The polypeptide is Cytochrome b6 (Pyropia yezoensis (Susabi-nori)).